The primary structure comprises 396 residues: S-adenosylmethionine synthase (396 aa).

Position 16 (histidine 16) interacts with ATP. Aspartate 18 is a binding site for Mg(2+). A K(+)-binding site is contributed by glutamate 44. L-methionine is bound by residues glutamate 57 and glutamine 100. The tract at residues 100–110 (QSVDIAQGVDR) is flexible loop. ATP contacts are provided by residues 165–167 (DAK), aspartate 240, 246–247 (RK), alanine 263, and lysine 267. Aspartate 240 is a binding site for L-methionine. An L-methionine-binding site is contributed by lysine 271.

The protein belongs to the AdoMet synthase family. Homotetramer; dimer of dimers. The cofactor is Mg(2+). Requires K(+) as cofactor.

It localises to the cytoplasm. It carries out the reaction L-methionine + ATP + H2O = S-adenosyl-L-methionine + phosphate + diphosphate. It functions in the pathway amino-acid biosynthesis; S-adenosyl-L-methionine biosynthesis; S-adenosyl-L-methionine from L-methionine: step 1/1. Catalyzes the formation of S-adenosylmethionine (AdoMet) from methionine and ATP. The overall synthetic reaction is composed of two sequential steps, AdoMet formation and the subsequent tripolyphosphate hydrolysis which occurs prior to release of AdoMet from the enzyme. This is S-adenosylmethionine synthase from Pseudomonas syringae pv. tomato (strain ATCC BAA-871 / DC3000).